The chain runs to 823 residues: Leucine--tRNA ligase (823 aa).

Residues 42–52 carry the 'HIGH' region motif; it reads PYPSGTLHMGH. The 'KMSKS' region motif lies at 575-579; sequence KMSKS. ATP is bound at residue Lys-578.

Belongs to the class-I aminoacyl-tRNA synthetase family.

The protein resides in the cytoplasm. It catalyses the reaction tRNA(Leu) + L-leucine + ATP = L-leucyl-tRNA(Leu) + AMP + diphosphate. In Legionella pneumophila subsp. pneumophila (strain Philadelphia 1 / ATCC 33152 / DSM 7513), this protein is Leucine--tRNA ligase.